Here is a 130-residue protein sequence, read N- to C-terminus: Small ribosomal subunit protein uS9 (130 aa).

The protein belongs to the universal ribosomal protein uS9 family.

This Cupriavidus taiwanensis (strain DSM 17343 / BCRC 17206 / CCUG 44338 / CIP 107171 / LMG 19424 / R1) (Ralstonia taiwanensis (strain LMG 19424)) protein is Small ribosomal subunit protein uS9.